A 413-amino-acid polypeptide reads, in one-letter code: Eukaryotic initiation factor 4A-11 (413 aa).

The Q motif signature appears at 40–68; sequence ESFDAMGLQENLLRGIYAYGFEKPSAIQQ. Residues 71 to 241 form the Helicase ATP-binding domain; sequence IVPFCKGLDV…RKFMNKPVRI (171 aa). 84–91 contributes to the ATP binding site; the sequence is AQSGTGKT. The DEAD box motif lies at 189 to 192; sequence DEAD. Residues 252–413 form the Helicase C-terminal domain; sequence GIKQFYVNVD…ELPANVADLL (162 aa).

The protein belongs to the DEAD box helicase family. eIF4A subfamily. As to quaternary structure, eIF4F is a multi-subunit complex, the composition of which varies with external and internal environmental conditions. It is composed of at least EIF4A, EIF4E and EIF4G.

The enzyme catalyses ATP + H2O = ADP + phosphate + H(+). Functionally, ATP-dependent RNA helicase which is a subunit of the eIF4F complex involved in cap recognition and is required for mRNA binding to ribosome. In the current model of translation initiation, eIF4A unwinds RNA secondary structures in the 5'-UTR of mRNAs which is necessary to allow efficient binding of the small ribosomal subunit, and subsequent scanning for the initiator codon. In Nicotiana tabacum (Common tobacco), this protein is Eukaryotic initiation factor 4A-11.